A 60-amino-acid chain; its full sequence is Large ribosomal subunit protein bL32 (60 aa).

It belongs to the bacterial ribosomal protein bL32 family.

The sequence is that of Large ribosomal subunit protein bL32 from Borrelia hermsii (strain HS1 / DAH).